A 454-amino-acid chain; its full sequence is Phenylalanine--tRNA ligase, mitochondrial (454 aa).

Substrate-binding positions include Ser141–Gln144, Arg163, Val170–Tyr172, Gln177–Glu179, Glu266, and Phe291. The tract at residues Lys327 to Leu347 is disordered. Residues Ser328 to Leu347 are compositionally biased toward low complexity. The 94-residue stretch at Ser361 to Arg454 folds into the FDX-ACB domain.

This sequence belongs to the class-II aminoacyl-tRNA synthetase family. In terms of assembly, monomer.

The protein resides in the mitochondrion matrix. It carries out the reaction tRNA(Phe) + L-phenylalanine + ATP = L-phenylalanyl-tRNA(Phe) + AMP + diphosphate + H(+). Its function is as follows. Is responsible for the charging of tRNA(Phe) with phenylalanine in mitochondrial translation. The sequence is that of Phenylalanine--tRNA ligase, mitochondrial (mpheS) from Dictyostelium discoideum (Social amoeba).